A 1051-amino-acid polypeptide reads, in one-letter code: Anucleate primary sterigmata protein B (1051 aa).

2 coiled-coil regions span residues 10 to 200 and 239 to 285; these read IDRL…YAIA and STLV…ELKL. A compositionally biased stretch (basic and acidic residues) spans 58-90; that stretch reads KDNQGLKRKIRDLEKQLKDQQSDKESMLNHDPE. Disordered stretches follow at residues 58 to 100 and 141 to 160; these read KDNQ…DRDH and LKSL…REER. Positions 294–303 are enriched in basic and acidic residues; that stretch reads AGDSILDRSA. 4 disordered regions span residues 294 to 329, 877 to 902, 909 to 928, and 984 to 1051; these read AGDS…AERE, NHPR…LAER, NTAA…QMTN, and EERD…DIEV. The segment covering 309–321 has biased composition (polar residues); sequence RPSSSISDRTGQS. Coiled-coil stretches lie at residues 325 to 743 and 787 to 878; these read DAER…RNSM and RNLL…LQNH. Composition is skewed to polar residues over residues 877 to 897 and 916 to 928; these read NHPR…SSTI and ARSS…QMTN. Residues 950–1004 adopt a coiled-coil conformation; that stretch reads NQEVWIKRLHELERRLKAEREARLLDRNGARRRLEERDAENKRLRAQLDRQRLRQ. Basic and acidic residues-rich tracts occupy residues 984-1001 and 1028-1040; these read EERD…DRQR and EGYR…HSSS.

The protein localises to the cytoplasm. Its function is as follows. Involved in regulation of nuclear migration. May be involved in regulating nuclear positioning. This is Anucleate primary sterigmata protein B (apsB) from Emericella nidulans (strain FGSC A4 / ATCC 38163 / CBS 112.46 / NRRL 194 / M139) (Aspergillus nidulans).